The chain runs to 138 residues: Acidic phospholipase A2 MVL-PLA2 (138 aa).

The N-terminal stretch at 1–16 is a signal peptide; it reads MRTLWIVAVCLMGVEG. 7 cysteine pairs are disulfide-bonded: Cys42–Cys131, Cys44–Cys60, Cys59–Cys111, Cys65–Cys138, Cys66–Cys104, Cys73–Cys97, and Cys91–Cys102. Ca(2+) is bound by residues Tyr43, Gly45, and Gly47. Residue His63 is part of the active site. Asp64 serves as a coordination point for Ca(2+). The short motif at 86 to 88 is the May inhibit integrin function (Atypical cell attachment site) element; it reads NGD. Asp105 is an active-site residue.

The protein belongs to the phospholipase A2 family. Group II subfamily. D49 sub-subfamily. Requires Ca(2+) as cofactor. As to expression, expressed by the venom gland.

It localises to the secreted. The catalysed reaction is a 1,2-diacyl-sn-glycero-3-phosphocholine + H2O = a 1-acyl-sn-glycero-3-phosphocholine + a fatty acid + H(+). In terms of biological role, snake venom phospholipase A2 (PLA2) that displays an inhibitory effect, independent from its catalytic activity, on tumor cell adhesion and migration. This effect is mediated via specific inhibition of integrins alpha-5/beta-1 (ITGA5/ITGB1), alpha-v/beta-3 (ITGAV/ITGB3) and alpha-v/beta-6 (ITGAV/ITGB6). PLA2 catalyzes the calcium-dependent hydrolysis of the 2-acyl groups in 3-sn-phosphoglycerides. The sequence is that of Acidic phospholipase A2 MVL-PLA2 from Macrovipera lebetina transmediterranea (Blunt-nosed viper).